The following is an 88-amino-acid chain: Small ribosomal subunit protein bS20 (88 aa).

Residues 1 to 25 (MANSAQARKRARQATKARAHNASLR) form a disordered region. The span at 7 to 19 (ARKRARQATKARA) shows a compositional bias: basic residues.

Belongs to the bacterial ribosomal protein bS20 family.

Functionally, binds directly to 16S ribosomal RNA. In Azoarcus sp. (strain BH72), this protein is Small ribosomal subunit protein bS20.